The following is a 214-amino-acid chain: Oxaloacetate tautomerase fahd-1, mitochondrial (214 aa).

Residues Glu-65, Glu-67, and Asp-96 each contribute to the Mg(2+) site.

Belongs to the FAH family. Mg(2+) is required as a cofactor. It depends on Mn(2+) as a cofactor. As to expression, widely expressed.

The protein localises to the mitochondrion. It catalyses the reaction oxaloacetate = enol-oxaloacetate. Functionally, tautomerase that converts enol-oxaloacetate, a strong inhibitor of succinate dehydrogenase, to the physiological keto form of oxaloacetate. The polypeptide is Oxaloacetate tautomerase fahd-1, mitochondrial (Caenorhabditis elegans).